Reading from the N-terminus, the 278-residue chain is MKLCFNEATTLENSNLKLDLELCEKHGYDYIEIRTMDKLPEYLKDHSLDDLAEYFQTHHIKPLALNALVFFNNRDEKGHNEIITEFKGMMETCKTLGVKYVVAVPLVTEQKIVKEEIKKSSVDVLTELSDIAEPYGVKIALEFVGHPQCTVNTFEQAYEIVNTVNRDNVGLVLDSFHFHAMGSNIESLKQADGKKIFIYHIDDTEDFPIGFLTDEDRVWPGQGAIDLDAHLSALKEIGFSDVVSVELFRPEYYKLTAEEAIQTAKKTTVDVVSKYFSM.

The a divalent metal cation site is built by Glu142, Asp174, His200, and Glu246.

Belongs to the IolI family. Mn(2+) serves as cofactor. Requires Fe(2+) as cofactor. It depends on Co(2+) as a cofactor.

It catalyses the reaction scyllo-inosose = scyllo-inosine. The protein operates within polyol metabolism; myo-inositol degradation into acetyl-CoA. Involved in the reversible interconverion of 2-keto-myo-inositol (2KMI, inosose or 2,4,6/3,5-pentahydroxycyclohexanone) to 1-keto-D-chiro-inositol (1KDCI or 2,3,5/4,6-pentahydroxycyclohexanone). This is Inosose isomerase (iolI) from Bacillus subtilis (strain 168).